The following is a 668-amino-acid chain: Auxilin-like clathrin uncoating factor SWA2 (668 aa).

A disordered region spans residues 1–95 (MSDPFAHLLT…ANNTPPSALA (95 aa)). Residues 1–100 (MSDPFAHLLT…PSALANTDDD (100 aa)) form a CB1 region. Polar residues predominate over residues 17–36 (SASASKETTPQSSNSPSITG). Phosphoserine occurs at positions 52 and 64. Low complexity predominate over residues 76 to 92 (PTNSTTKSNTANNTPPS). Residues 140-180 (DEVKDMEIARLMSLGLSIEEATEFYENDVTYERYLEILKSK) enclose the UBA domain. The tract at residues 238-302 (EANDRLNNYS…FETKIDITKR (65 aa)) is CB2. Residues Ser264, Ser308, and Ser312 each carry the phosphoserine modification. Disordered regions lie at residues 302 to 323 (RTAP…EENS) and 339 to 359 (EGNL…ENSN). Positions 303–362 (TAPDVSHSSSPTSGILIEENSRRNEPLIEDSLLDFSEGNLTNSKSNEDSTLFNENSNTDS) are CB3. The segment covering 340–359 (GNLTNSKSNEDSTLFNENSN) has biased composition (polar residues). TPR repeat units follow at residues 374-407 (YNEF…LPLN), 412-445 (IIAL…FPSS), and 467-500 (PKIM…NFFD). Residues 511–556 (QDFINPPPVKKSMPVKKKTTTTSPATKKQNLTASSSNSPISVDSTS) form a disordered region. The span at 539–555 (QNLTASSSNSPISVDST) shows a compositional bias: polar residues. Residues 603–668 (CNWKDVSMQD…DKFKLQNDIN (66 aa)) enclose the J domain.

Interacts with the clathrin light and heavy chains CLC1 and CHC1, respectively. Binds to clathrin with its N-terminal domain containing 3 clathrin-binding (CB) motifs. Association with clathrin is transient. Binds to polyubiquitin and ubiquitinated proteins.

The protein resides in the cytoplasm. The protein localises to the endoplasmic reticulum membrane. In terms of biological role, cofactor for the uncoating of clathrin-coated vesicles (CCVs) by Hsp70-type chaperones (SSA1/2/3 and SSB1/2). Coat disassembly is important for fusion of vesicles with target membranes and for recycling components of clathrin coats to the cytoplasm for further rounds of vesicle formation. Binds to assembled clathrin and recruits the ATP-activated chaperone to CCVs. Stimulates the ATPase activity of the clathrin-associated Hsp70-type chaperone SSA1, which then disrupts clathrin-clathrin interactions, leading to release of the clathrin coat. In addition, prevents unproductive clathrin assembly in the cell. Also required for cortical endoplasmic reticulum inheritance. This chain is Auxilin-like clathrin uncoating factor SWA2 (SWA2), found in Saccharomyces cerevisiae (strain ATCC 204508 / S288c) (Baker's yeast).